Here is a 2201-residue protein sequence, read N- to C-terminus: RNA-directed RNA polymerase L (2201 aa).

The segment at 26-285 is endonuclease; it reads KNIMLAQTQI…VCSKSVEYTF (260 aa). Glu51, Asp88, and Glu101 together coordinate Mn(2+). Residue Lys114 is part of the active site. In terms of domain architecture, RdRp catalytic spans 1156–1352; the sequence is LDMKSVVRQS…FLSDRLNKFV (197 aa). Position 1312 (Asp1312) interacts with Mg(2+).

This sequence belongs to the Bunyavirales RNA polymerase family. In terms of assembly, homomultimer; the oligomeric structure is essential for the polymerase activity. Interacts with nucleoprotein N. Interacts with protein Z; this interaction inhibits viral transcription and replication, Z partially blocks the product exit tunnel for the releasing nascent RNA product. Mn(2+) serves as cofactor. Mg(2+) is required as a cofactor.

The protein resides in the virion. Its subcellular location is the host cytoplasm. The enzyme catalyses RNA(n) + a ribonucleoside 5'-triphosphate = RNA(n+1) + diphosphate. In terms of biological role, RNA-dependent RNA polymerase, which is responsible for the replication and transcription of the viral RNA genome using antigenomic RNA as an intermediate. During transcription, synthesizes subgenomic RNAs and assures their capping by a cap-snatching mechanism, which involves the endonuclease activity cleaving the host capped pre-mRNAs. These short capped RNAs are then used as primers for viral transcription. The 3'-end of subgenomic mRNAs molecules are heterogeneous and not polyadenylated. The replicase function is to direct synthesis of antigenomic and genomic RNA which are encapsidated and non capped. As a consequence of the use of the same enzyme for both transcription and replication, these mechanisms need to be well coordinated. These processes may be regulated by proteins N and Z in a dose-dependent manner. Z protein inhibits the viral polymerase L und thus the viral transcription and RNA synthesis. This is RNA-directed RNA polymerase L from Oecomys bicolor (Bicolored arboreal rice rat).